The chain runs to 164 residues: Ribosome maturation factor RimM (164 aa).

The PRC barrel domain occupies 92 to 164 (PDSEYYVANL…FVVIVPPEFI (73 aa)).

This sequence belongs to the RimM family. In terms of assembly, binds ribosomal protein uS19.

The protein localises to the cytoplasm. Functionally, an accessory protein needed during the final step in the assembly of 30S ribosomal subunit, possibly for assembly of the head region. Essential for efficient processing of 16S rRNA. May be needed both before and after RbfA during the maturation of 16S rRNA. It has affinity for free ribosomal 30S subunits but not for 70S ribosomes. The sequence is that of Ribosome maturation factor RimM from Orientia tsutsugamushi (strain Ikeda) (Rickettsia tsutsugamushi).